The chain runs to 153 residues: Putative WASP homolog-associated protein with actin, membranes and microtubules-like protein 1 (153 aa).

The stretch at 113-151 forms a coiled coil; it reads AIQFYEIQLELYEVKFEILKNKEILLTTQLDSLERLIKD.

This Homo sapiens (Human) protein is Putative WASP homolog-associated protein with actin, membranes and microtubules-like protein 1 (WHAMMP3).